A 384-amino-acid chain; its full sequence is Fructose-1,6-bisphosphate aldolase/phosphatase (384 aa).

The active-site Proton acceptor; for FBP phosphatase activity is the Asp11. Asp11, His18, Asp52, and Asp53 together coordinate Mg(2+). His18 is a binding site for beta-D-fructose 1,6-bisphosphate. His18 contacts dihydroxyacetone phosphate. Residue Tyr90 participates in beta-D-fructose 1,6-bisphosphate binding. Gln94 contacts Mg(2+). 103–104 contacts beta-D-fructose 1,6-bisphosphate; it reads GN. Mg(2+) is bound at residue Asp131. Residue Lys132 coordinates beta-D-fructose 1,6-bisphosphate. Residue Lys132 participates in dihydroxyacetone phosphate binding. The active-site Proton donor/acceptor; for FBP aldolase activity is Tyr228. Lys231, Asp232, and Asp233 together coordinate Mg(2+). The Schiff-base intermediate with DHAP; for FBP aldolase activity role is filled by Lys231. Residues 241–242, Arg265, Asp286, and Tyr347 contribute to the beta-D-fructose 1,6-bisphosphate site; that span reads QH. Residues Arg265 and Asp286 each contribute to the dihydroxyacetone phosphate site.

The protein belongs to the FBP aldolase/phosphatase family. As to quaternary structure, homooctamer; dimer of tetramers. Mg(2+) is required as a cofactor.

It carries out the reaction beta-D-fructose 1,6-bisphosphate + H2O = beta-D-fructose 6-phosphate + phosphate. The enzyme catalyses beta-D-fructose 1,6-bisphosphate = D-glyceraldehyde 3-phosphate + dihydroxyacetone phosphate. Its pathway is carbohydrate biosynthesis; gluconeogenesis. Its function is as follows. Catalyzes two subsequent steps in gluconeogenesis: the aldol condensation of dihydroxyacetone phosphate (DHAP) and glyceraldehyde-3-phosphate (GA3P) to fructose-1,6-bisphosphate (FBP), and the dephosphorylation of FBP to fructose-6-phosphate (F6P). This Sulfurisphaera tokodaii (strain DSM 16993 / JCM 10545 / NBRC 100140 / 7) (Sulfolobus tokodaii) protein is Fructose-1,6-bisphosphate aldolase/phosphatase.